Reading from the N-terminus, the 571-residue chain is Urease subunit alpha (571 aa).

The Urease domain maps to 133–571; the sequence is GGIDTHVHFI…LPLTQRYFLF (439 aa). Residues His138, His140, and Lys221 each coordinate Ni(2+). An N6-carboxylysine modification is found at Lys221. Position 223 (His223) interacts with substrate. His250 and His276 together coordinate Ni(2+). The active-site Proton donor is the His324. Asp364 contacts Ni(2+).

Belongs to the metallo-dependent hydrolases superfamily. Urease alpha subunit family. As to quaternary structure, heterotrimer of UreA (gamma), UreB (beta) and UreC (alpha) subunits. Three heterotrimers associate to form the active enzyme. Ni cation serves as cofactor. Post-translationally, carboxylation allows a single lysine to coordinate two nickel ions.

It localises to the cytoplasm. The enzyme catalyses urea + 2 H2O + H(+) = hydrogencarbonate + 2 NH4(+). Its pathway is nitrogen metabolism; urea degradation; CO(2) and NH(3) from urea (urease route): step 1/1. This chain is Urease subunit alpha, found in Staphylococcus aureus (strain USA300).